We begin with the raw amino-acid sequence, 323 residues long: MIEFGDFYRLIAKGPLSPWLDTLPAQLSAWQRESLHGKFKTWFNAVEHLPQLTPTTLDLHSGVRAEMSPPISAGQREGMENMLRALMPWRKGPFSLYGLDIDTEWRSDWKWQRVLPHISPLAGRTILDVGCGSGYHLWRMIGEGAHLAVGIDPMQLFLCQFEAIRKLLGGDQRAHVLPLGIEQLPELAAFDAVFSMGVLYHRRSPLDHLYQLKNQLVTDGELVLETLVVEGDSQQVLVPGDRYAQMRNVYFIPSAPALKAWLEKCGFVDVRIADMAVTTTEEQRRTDWMTSESLAEFLDPHDHSKTVEGYPAPLRAVLIARKP.

Carboxy-S-adenosyl-L-methionine-binding positions include lysine 91, tryptophan 105, lysine 110, glycine 130, 181-182 (IE), methionine 196, tyrosine 200, and arginine 315.

The protein belongs to the class I-like SAM-binding methyltransferase superfamily. CmoB family. As to quaternary structure, homotetramer.

The enzyme catalyses carboxy-S-adenosyl-L-methionine + 5-hydroxyuridine(34) in tRNA = 5-carboxymethoxyuridine(34) in tRNA + S-adenosyl-L-homocysteine + H(+). In terms of biological role, catalyzes carboxymethyl transfer from carboxy-S-adenosyl-L-methionine (Cx-SAM) to 5-hydroxyuridine (ho5U) to form 5-carboxymethoxyuridine (cmo5U) at position 34 in tRNAs. The chain is tRNA U34 carboxymethyltransferase from Yersinia pseudotuberculosis serotype O:1b (strain IP 31758).